The sequence spans 374 residues: Peptide chain release factor 2 (374 aa).

Gln-250 is subject to N5-methylglutamine.

Belongs to the prokaryotic/mitochondrial release factor family. Post-translationally, methylated by PrmC. Methylation increases the termination efficiency of RF2.

It is found in the cytoplasm. Functionally, peptide chain release factor 2 directs the termination of translation in response to the peptide chain termination codons UGA and UAA. The polypeptide is Peptide chain release factor 2 (Beutenbergia cavernae (strain ATCC BAA-8 / DSM 12333 / CCUG 43141 / JCM 11478 / NBRC 16432 / NCIMB 13614 / HKI 0122)).